The chain runs to 364 residues: tRNA 2-selenouridine synthase (364 aa).

The 124-residue stretch at 14–137 (LLADTPLIDV…LRQTAIQATW (124 aa)) folds into the Rhodanese domain. Cys-97 serves as the catalytic S-selanylcysteine intermediate.

It belongs to the SelU family. In terms of assembly, monomer.

The enzyme catalyses 5-methylaminomethyl-2-thiouridine(34) in tRNA + selenophosphate + (2E)-geranyl diphosphate + H2O + H(+) = 5-methylaminomethyl-2-selenouridine(34) in tRNA + (2E)-thiogeraniol + phosphate + diphosphate. It catalyses the reaction 5-methylaminomethyl-2-thiouridine(34) in tRNA + (2E)-geranyl diphosphate = 5-methylaminomethyl-S-(2E)-geranyl-thiouridine(34) in tRNA + diphosphate. The catalysed reaction is 5-methylaminomethyl-S-(2E)-geranyl-thiouridine(34) in tRNA + selenophosphate + H(+) = 5-methylaminomethyl-2-(Se-phospho)selenouridine(34) in tRNA + (2E)-thiogeraniol. It carries out the reaction 5-methylaminomethyl-2-(Se-phospho)selenouridine(34) in tRNA + H2O = 5-methylaminomethyl-2-selenouridine(34) in tRNA + phosphate. In terms of biological role, involved in the post-transcriptional modification of the uridine at the wobble position (U34) of tRNA(Lys), tRNA(Glu) and tRNA(Gln). Catalyzes the conversion of 2-thiouridine (S2U-RNA) to 2-selenouridine (Se2U-RNA). Acts in a two-step process involving geranylation of 2-thiouridine (S2U) to S-geranyl-2-thiouridine (geS2U) and subsequent selenation of the latter derivative to 2-selenouridine (Se2U) in the tRNA chain. This is tRNA 2-selenouridine synthase from Salmonella heidelberg (strain SL476).